A 184-amino-acid chain; its full sequence is Photosystem I assembly protein Ycf4 (184 aa).

The next 2 membrane-spanning stretches (helical) occupy residues 22-42 (FFWACILFLGSLGFLVVGTSS) and 57-77 (ISFFPQGIVMSFYGIAGLFIS).

Belongs to the Ycf4 family.

The protein localises to the plastid. It localises to the chloroplast thylakoid membrane. Functionally, seems to be required for the assembly of the photosystem I complex. In Lemna minor (Common duckweed), this protein is Photosystem I assembly protein Ycf4.